The chain runs to 72 residues: Mitotic-spindle organizing protein 1 (72 aa).

It belongs to the MOZART1 family. As to quaternary structure, part of the gamma-tubulin complex.

The protein localises to the cytoplasm. Its subcellular location is the cytoskeleton. It is found in the microtubule organizing center. The protein resides in the spindle pole body. Required for gamma-tubulin complex recruitment to the microtubule organizing center (MTOC). The chain is Mitotic-spindle organizing protein 1 from Cryptococcus neoformans var. neoformans serotype D (strain B-3501A) (Filobasidiella neoformans).